The primary structure comprises 376 residues: Carbamoyl phosphate synthase small chain (376 aa).

The tract at residues 1–187 is CPSase; sequence MKALLALEDG…KEDGSFLWKQ (187 aa). Ser-45, Gly-239, and Gly-241 together coordinate L-glutamine. A Glutamine amidotransferase type-1 domain is found at 189–376; it reads KIPLIVYDYG…KEVVLLKLGC (188 aa). Cys-266 functions as the Nucleophile in the catalytic mechanism. L-glutamine-binding residues include Leu-267, Gln-270, Asn-308, Gly-310, and Phe-311. Active-site residues include His-349 and Glu-351.

It belongs to the CarA family. In terms of assembly, composed of two chains; the small (or glutamine) chain promotes the hydrolysis of glutamine to ammonia, which is used by the large (or ammonia) chain to synthesize carbamoyl phosphate. Tetramer of heterodimers (alpha,beta)4.

It catalyses the reaction hydrogencarbonate + L-glutamine + 2 ATP + H2O = carbamoyl phosphate + L-glutamate + 2 ADP + phosphate + 2 H(+). The catalysed reaction is L-glutamine + H2O = L-glutamate + NH4(+). It functions in the pathway amino-acid biosynthesis; L-arginine biosynthesis; carbamoyl phosphate from bicarbonate: step 1/1. The protein operates within pyrimidine metabolism; UMP biosynthesis via de novo pathway; (S)-dihydroorotate from bicarbonate: step 1/3. Small subunit of the glutamine-dependent carbamoyl phosphate synthetase (CPSase). CPSase catalyzes the formation of carbamoyl phosphate from the ammonia moiety of glutamine, carbonate, and phosphate donated by ATP, constituting the first step of 2 biosynthetic pathways, one leading to arginine and/or urea and the other to pyrimidine nucleotides. The small subunit (glutamine amidotransferase) binds and cleaves glutamine to supply the large subunit with the substrate ammonia. This Lawsonia intracellularis (strain PHE/MN1-00) protein is Carbamoyl phosphate synthase small chain.